The sequence spans 350 residues: Derriere protein (350 aa).

The N-terminal stretch at 1 to 16 is a signal peptide; it reads MLSLACFFSFLLMVKS. Residues 17 to 236 constitute a propeptide that is removed on maturation; it reads SPLTFQERML…SSCKTPRAKR (220 aa). N-linked (GlcNAc...) asparagine glycosylation is found at Asn171 and Asn202. 3 disulfide bridges follow: Cys249-Cys315, Cys278-Cys347, and Cys282-Cys349.

The protein belongs to the TGF-beta family. Homodimer; disulfide-linked. Also forms heterodimers with other TGF-beta family members including nodal2/nr-2 and bmp4.

It localises to the secreted. Functionally, required for posterior mesoderm formation during embryogenesis. Acts indirectly to suppress head formation by altering mesodermal patterning. Also involved in the establishment of left-right axis asymmetry, acting upstream of nodal/nr-1. Can exert long-range effects in the embryo. The protein is Derriere protein of Xenopus tropicalis (Western clawed frog).